The following is a 387-amino-acid chain: Zinc finger transcription factor YY1 (387 aa).

5 C2H2-type zinc fingers span residues F79–H103, Y108–H132, Y138–H162, H168–H193, and Y230–H255. The tract at residues T201–R290 is MED18-binding. The interval H258 to D387 is disordered. S284 carries the post-translational modification Phosphoserine. The segment covering K291–S305 has biased composition (basic residues). The Nuclear localization signal motif lies at G319–S326. Positions A339–G367 form a coiled coil. 2 stretches are compositionally biased toward acidic residues: residues E344 to N363 and N373 to D387.

As to quaternary structure, interacts with MED18 to suppress disease susceptibility via the repression of genes glutaredoxins GRX480, GRXS13 and thioredoxin TRX-h5. As to expression, mostly expressed in flowers, to a lower extent in seedlings, stems and leaves, and, at low levels, in roots and senescent leaves.

The protein localises to the nucleus. Its function is as follows. Dual-function transcription factor with both repression and activation activities. Binds to 5'-CCATATT-3' motif in target gene promoters (e.g. ABR1). Also binds to G-rich DNA motif 5'-GGGGGCAGTGG-3'. Regulates the expression of genes involved in diverse cellular pathways, including glucose metabolism, photosynthesis, phototropism and stress response (e.g. salt, drought and osmotic stress). Regulates plant immunity, especially during necrotrophic fungal infection (e.g. B.cinerea). Binds to ABR1 promoter and promotes its expression, thus negatively regulating the abscisic acid (ABA) signaling pathway. Represses ABA- and salt-responsive genes expression. In Arabidopsis thaliana (Mouse-ear cress), this protein is Zinc finger transcription factor YY1.